We begin with the raw amino-acid sequence, 807 residues long: DNA gyrase subunit B (807 aa).

In terms of domain architecture, Toprim spans 429 to 543; it reads SELFIVEGDS…KGYLYIAQPP (115 aa). 3 residues coordinate Mg(2+): Glu435, Asp508, and Asp510.

Belongs to the type II topoisomerase GyrB family. In terms of assembly, heterotetramer, composed of two GyrA and two GyrB chains. In the heterotetramer, GyrA contains the active site tyrosine that forms a transient covalent intermediate with DNA, while GyrB binds cofactors and catalyzes ATP hydrolysis. Mg(2+) serves as cofactor. Requires Mn(2+) as cofactor. Ca(2+) is required as a cofactor.

The protein resides in the cytoplasm. The catalysed reaction is ATP-dependent breakage, passage and rejoining of double-stranded DNA.. Functionally, a type II topoisomerase that negatively supercoils closed circular double-stranded (ds) DNA in an ATP-dependent manner to modulate DNA topology and maintain chromosomes in an underwound state. Negative supercoiling favors strand separation, and DNA replication, transcription, recombination and repair, all of which involve strand separation. Also able to catalyze the interconversion of other topological isomers of dsDNA rings, including catenanes and knotted rings. Type II topoisomerases break and join 2 DNA strands simultaneously in an ATP-dependent manner. This chain is DNA gyrase subunit B, found in Rickettsia conorii (strain ATCC VR-613 / Malish 7).